A 1704-amino-acid chain; its full sequence is Phospholipid-transporting ATPase ABCA3 (1704 aa).

N-linked (GlcNAc...) asparagine glycosylation is present at Asn14. A helical transmembrane segment spans residues 22 to 42 (VLVTVLELFLPLLFSGILIWL). 4 N-linked (GlcNAc...) asparagine glycosylation sites follow: Asn53, Asn124, Asn140, and Asn228. 5 helical membrane passes run 251 to 271 (ISDP…MLSF), 307 to 327 (AWFL…TLLF), 344 to 364 (SLVL…SFMV), 373 to 393 (MAAT…FFVA), and 405 to 425 (LLSC…IGKF). One can recognise an ABC transporter 1 domain in the interval 530-763 (IKIKHLSKVF…YGAGYHMTLV (234 aa)). 566-573 (GHNGAGKT) contributes to the ATP binding site. 2 N-linked (GlcNAc...) asparagine glycosylation sites follow: Asn620 and Asn945. The next 6 membrane-spanning stretches (helical) occupy residues 1100–1120 (IALN…ILAV), 1144–1164 (SALL…LVVF), 1183–1203 (LLLM…SFFF), 1213–1233 (LTIF…IMRI), 1245–1265 (LDHV…SNFY), and 1310–1330 (MAAS…NLLW). Asn1350 carries an N-linked (GlcNAc...) asparagine glycan. The region spanning 1381 to 1614 (LIINELSKVY…FGSGYSLQAK (234 aa)) is the ABC transporter 2 domain. Position 1416–1423 (1416–1423 (GFNGAGKT)) interacts with ATP.

Homooligomer; disulfide-linked. In terms of processing, N-glycosylated. Localization at intracellular vesicles is accompanied by processing of oligosaccharide from high mannose type to complex type. N-linked glycosylation at Asn-124 and Asn-140 is required for stability and efficient anterograde trafficking and prevents from proteasomal degradation. Proteolytically cleaved by CTSL and to a lower extent by CTSB within multivesicular bodies (MVB) and lamellar bodies (LB) leading to a mature form of 150 kDa. As to expression, highly expressed in lung, moderately expressed in stomach, intestine, and kidney and weakly expressed in thyroid, brain, liver, spleen, heart, testis, and thymus.

It localises to the endosome. The protein localises to the multivesicular body membrane. The protein resides in the cytoplasmic vesicle membrane. Its subcellular location is the late endosome membrane. It is found in the lysosome membrane. The catalysed reaction is ATP + H2O + xenobioticSide 1 = ADP + phosphate + xenobioticSide 2.. It catalyses the reaction a 1,2-diacyl-sn-glycero-3-phosphocholine(in) + ATP + H2O = a 1,2-diacyl-sn-glycero-3-phosphocholine(out) + ADP + phosphate + H(+). It carries out the reaction ATP + H2O + phospholipidSide 1 = ADP + phosphate + phospholipidSide 2.. The enzyme catalyses 1,2-dihexadecanoyl-sn-glycero-3-phosphocholine(in) + ATP + H2O = 1,2-dihexadecanoyl-sn-glycero-3-phosphocholine(out) + ADP + phosphate + H(+). The catalysed reaction is cholesterol(in) + ATP + H2O = cholesterol(out) + ADP + phosphate + H(+). It catalyses the reaction a 1,2-diacyl-sn-glycero-3-phospho-(1'-sn-glycerol)(in) + ATP + H2O = a 1,2-diacyl-sn-glycero-3-phospho-(1'-sn-glycerol)(out) + ADP + phosphate + H(+). Functionally, catalyzes the ATP-dependent transport of phospholipids such as phosphatidylcholine and phosphoglycerol from the cytoplasm into the lumen side of lamellar bodies, in turn participates in the lamellar bodies biogenesis and homeostasis of pulmonary surfactant. Transports preferentially phosphatidylcholine containing short acyl chains. In addition plays a role as an efflux transporter of miltefosine across macrophage membranes and free cholesterol (FC) through intralumenal vesicles by removing FC from the cell as a component of surfactant and protects cells from free cholesterol toxicity. The polypeptide is Phospholipid-transporting ATPase ABCA3 (Rattus norvegicus (Rat)).